A 415-amino-acid chain; its full sequence is Mitogen-activated protein kinase MPS1 (415 aa).

The Protein kinase domain maps to 23–314 (YTVTKELGQG…VEQALEHPYL (292 aa)). Residues 29–37 (LGQGAYGIV) and Lys52 each bind ATP. Residues 363 to 394 (GAGGHGAPHAPQVPIPAGAGQGQWKAEDPRPQ) form a disordered region.

It belongs to the protein kinase superfamily. Ser/Thr protein kinase family. MAP kinase subfamily. Interacts with transcription factor MIG1. Interacts with transcription factor SWI6. The cofactor is Mg(2+).

It carries out the reaction L-seryl-[protein] + ATP = O-phospho-L-seryl-[protein] + ADP + H(+). The enzyme catalyses L-threonyl-[protein] + ATP = O-phospho-L-threonyl-[protein] + ADP + H(+). Its function is as follows. Mitogen-activated protein kinase; part of the MCK1-MKK2-MPS1 MAP kinase (MAPK) signal transduction cascade that is essential for cell wall integrity and plant infection, but not for plant defense responses. Beside its role in pathogenesis, the MPS1 cascade is active in conidiation and cellular stress responses. Targets downstream of the MPS1-MAPK pathway include transcription factors MIG1 and SWI6, as well as GSK1 and MPG1. The polypeptide is Mitogen-activated protein kinase MPS1 (Pyricularia oryzae (strain 70-15 / ATCC MYA-4617 / FGSC 8958) (Rice blast fungus)).